A 377-amino-acid chain; its full sequence is Nitric oxide reductase FlRd-NAD(+) reductase (377 aa).

It belongs to the FAD-dependent oxidoreductase family. Requires FAD as cofactor.

It is found in the cytoplasm. The catalysed reaction is 2 reduced [nitric oxide reductase rubredoxin domain] + NAD(+) + H(+) = 2 oxidized [nitric oxide reductase rubredoxin domain] + NADH. It functions in the pathway nitrogen metabolism; nitric oxide reduction. Its function is as follows. One of at least two accessory proteins for anaerobic nitric oxide (NO) reductase. Reduces the rubredoxin moiety of NO reductase. This is Nitric oxide reductase FlRd-NAD(+) reductase from Shigella boydii serotype 18 (strain CDC 3083-94 / BS512).